The sequence spans 332 residues: Adenosine receptor A2b (332 aa).

Residues 1–8 are Extracellular-facing; that stretch reads MLLETQDA. Residues 9-33 form a helical membrane-spanning segment; sequence LYVALELVIAALSVAGNVLVCAAVG. The Cytoplasmic segment spans residues 34-43; that stretch reads TANTLQTPTN. A helical transmembrane segment spans residues 44–67; the sequence is YFLVSLAAADVAVGLFAIPFAITI. Topologically, residues 68–78 are extracellular; that stretch reads SLGFCTDFYGC. Residues Cys-78 and Cys-171 are joined by a disulfide bond. A helical membrane pass occupies residues 79-101; the sequence is LFLACFVLVLTQSSIFSLLAVAV. Topologically, residues 102 to 121 are cytoplasmic; the sequence is DRYLAICVPLRYKSLVTGTR. Residues 122 to 144 traverse the membrane as a helical segment; that stretch reads ARGVIAVLWVLAFGIGLTPFLGW. Residues 145-178 are Extracellular-facing; sequence NSKDSATNNCTEPWDGTTNESCCLVKCLFENVVP. 2 N-linked (GlcNAc...) asparagine glycosylation sites follow: Asn-153 and Asn-163. Position 174 (Glu-174) interacts with adenosine. A helical membrane pass occupies residues 179 to 203; sequence MSYMVYFNFFGCVLPPLLIMLVIYI. Topologically, residues 204-235 are cytoplasmic; sequence KIFLVACRQLQRTELMDHSRTTLQREIHAAKS. Residues 236-259 traverse the membrane as a helical segment; it reads LAMIVGIFALCWLPVHAVNCVTLF. Asn-254 is an adenosine binding site. At 260 to 267 the chain is on the extracellular side; sequence QPAQGKNK. A helical transmembrane segment spans residues 268–291; the sequence is PKWAMNMAILLSHANSVVNPIVYA. 2 residues coordinate adenosine: Ser-279 and His-280. The Cytoplasmic segment spans residues 292–332; it reads YRNRDFRYTFHKIISRYLLCQADVKSGNGQAGVQPALGVGL. Cys-311 carries the S-palmitoyl cysteine lipid modification.

This sequence belongs to the G-protein coupled receptor 1 family.

Its subcellular location is the cell membrane. Its function is as follows. Receptor for adenosine. The activity of this receptor is mediated by G proteins which activate adenylyl cyclase. This is Adenosine receptor A2b (ADORA2B) from Homo sapiens (Human).